A 218-amino-acid chain; its full sequence is Octanoyltransferase (218 aa).

One can recognise a BPL/LPL catalytic domain in the interval 31-206; it reads REAADEVWLV…QLVKHLDYAE (176 aa). Substrate contacts are provided by residues 70–77, 137–139, and 150–152; these read RGGQVTYH, SLG, and GLA. Catalysis depends on C168, which acts as the Acyl-thioester intermediate.

It belongs to the LipB family.

Its subcellular location is the cytoplasm. It catalyses the reaction octanoyl-[ACP] + L-lysyl-[protein] = N(6)-octanoyl-L-lysyl-[protein] + holo-[ACP] + H(+). Its pathway is protein modification; protein lipoylation via endogenous pathway; protein N(6)-(lipoyl)lysine from octanoyl-[acyl-carrier-protein]: step 1/2. Functionally, catalyzes the transfer of endogenously produced octanoic acid from octanoyl-acyl-carrier-protein onto the lipoyl domains of lipoate-dependent enzymes. Lipoyl-ACP can also act as a substrate although octanoyl-ACP is likely to be the physiological substrate. The protein is Octanoyltransferase of Pseudomonas savastanoi pv. phaseolicola (strain 1448A / Race 6) (Pseudomonas syringae pv. phaseolicola (strain 1448A / Race 6)).